We begin with the raw amino-acid sequence, 584 residues long: Endoribonuclease YBEY, chloroplastic (584 aa).

The transit peptide at 1 to 50 directs the protein to the chloroplast; it reads MLSRVCPTLRYNRIWSAHAREMPRATLLLLQPNFFHSSPKTALVNRLDVT. Zn(2+) is bound by residues His240, His244, and His250.

The protein belongs to the endoribonuclease YbeY family. Zn(2+) serves as cofactor.

Its subcellular location is the plastid. It is found in the chloroplast stroma. In terms of biological role, endoribonuclease required for chloroplast ribosomal RNA (rRNA) processing and essential for normal growth and development. May be involved in maturation of both the 5' and 3' ends of 16S, 23S, and 4.5S rRNAs. Cleaves chloroplast rRNAs, mRNAs and tRNAs in vitro. The chain is Endoribonuclease YBEY, chloroplastic from Arabidopsis thaliana (Mouse-ear cress).